We begin with the raw amino-acid sequence, 166 residues long: Glycine cleavage system H protein 3, mitochondrial (166 aa).

A mitochondrion-targeting transit peptide spans 1–35 (MALRMWASSTANALKLSSSASKSHLLPAFSISRCF). The region spanning 57–139 (VATIGITDHA…YEDGWMIKVK (83 aa)) is the Lipoyl-binding domain. Lys98 is subject to N6-lipoyllysine. Ser141 is modified (phosphoserine).

Belongs to the GcvH family. In terms of assembly, the glycine cleavage system is composed of four proteins: P, T, L and H. (R)-lipoate serves as cofactor. S-nitrosylated and/or glutathionylated at unknown positions in response to nitric oxide.

Its subcellular location is the mitochondrion. With respect to regulation, inhibited by harpin, S-nitrosoglutathione (GSNO), nitric oxide, N-ethylmaleimide and 5,5'-dithiobis-(2-nitrobenzoic acid). Functionally, the glycine decarboxylase (GDC) or glycine cleavage system catalyzes the degradation of glycine. The H protein shuttles the methylamine group of glycine from the P protein to the T protein. The polypeptide is Glycine cleavage system H protein 3, mitochondrial (GDH3) (Arabidopsis thaliana (Mouse-ear cress)).